Here is a 334-residue protein sequence, read N- to C-terminus: MSLDINQLVLHQLIKRDEQTLEVVLRDSLLDIEPVVQEMVEELHRVYSAKSKAYGLFNEESELAQALRLQRQGEEEFLGFSRAATVRLKDELAKYPFAEGGTVLFCHYRYLAVEYLLIAVLNSCNSMWVNDSLDVSSTRYLDIPHADIIARIDLTEWETSPDSLRYLTFLKGRVGRKVSDFFMDFLGAQEGLNTKVQNKGLLQAVDDFCEASDMNKQERQTCREQVYSYCNEQLQSGEEIALTELAQELPPLGDQNFAQFTEEKGYELAETFPADRSTLRQLMKYSGSGGGLTVNFDAKLLGERIFWDPATDTLTIKGTPPNLRDQLQRRVSEK.

This sequence belongs to the YejK family.

It is found in the cytoplasm. Its subcellular location is the nucleoid. The polypeptide is Nucleoid-associated protein PMI0825 (Proteus mirabilis (strain HI4320)).